Consider the following 518-residue polypeptide: Xylose import ATP-binding protein XylG (518 aa).

ABC transporter domains lie at 6–245 (LQMN…VGRE) and 262–507 (FEAR…LSHP). Residue 38 to 45 (GENGTGKS) coordinates ATP.

This sequence belongs to the ABC transporter superfamily. Xylose importer (TC 3.A.1.2.4) family. The complex is composed of two ATP-binding proteins (XylG), two transmembrane proteins (XylH) and a solute-binding protein (XylF).

It localises to the cell inner membrane. The catalysed reaction is D-xylose(out) + ATP + H2O = D-xylose(in) + ADP + phosphate + H(+). In terms of biological role, part of the ABC transporter complex XylFGH involved in xylose import. Responsible for energy coupling to the transport system. This chain is Xylose import ATP-binding protein XylG, found in Pseudomonas savastanoi pv. phaseolicola (strain 1448A / Race 6) (Pseudomonas syringae pv. phaseolicola (strain 1448A / Race 6)).